A 1105-amino-acid chain; its full sequence is Lysylphosphatidylglycerol biosynthesis bifunctional protein LysX (1105 aa).

A phosphatidylglycerol lysyltransferase region spans residues 1–603 (MTVTKPRSVQ…LLHHDGSAPD (603 aa)). Helical transmembrane passes span 20-40 (VPAA…LASI), 62-82 (FPDT…ALAA), 86-106 (IAWL…AADI), 117-137 (FGEN…VLGY), 154-174 (AVLV…VELF), 186-203 (YVAN…DLFT), and 208-228 (VFLN…ATIV). The tract at residues 604–1105 (VSGLRQSAIA…TLPFPLAKPH (502 aa)) is lysine--tRNA ligase. Mg(2+) is bound by residues Asp1017 and Glu1024.

This sequence in the N-terminal section; belongs to the LPG synthetase family. It in the C-terminal section; belongs to the class-II aminoacyl-tRNA synthetase family. Mg(2+) is required as a cofactor.

It localises to the cell membrane. It carries out the reaction tRNA(Lys) + L-lysine + ATP = L-lysyl-tRNA(Lys) + AMP + diphosphate. It catalyses the reaction L-lysyl-tRNA(Lys) + a 1,2-diacyl-sn-glycero-3-phospho-(1'-sn-glycerol) = a 1,2-diacyl-sn-glycero-3-phospho-1'-(3'-O-L-lysyl)-sn-glycerol + tRNA(Lys). Catalyzes the production of L-lysyl-tRNA(Lys)transfer and the transfer of a lysyl group from L-lysyl-tRNA(Lys) to membrane-bound phosphatidylglycerol (PG), which produces lysylphosphatidylglycerol (LPG), one of the components of the bacterial membrane with a positive net charge. LPG synthesis contributes to the resistance to cationic antimicrobial peptides (CAMPs) and likely protects M.tuberculosis against the CAMPs produced by competiting microorganisms (bacteriocins). In fact, the modification of anionic phosphatidylglycerol with positively charged L-lysine results in repulsion of the peptides. In Mycobacterium marinum (strain ATCC BAA-535 / M), this protein is Lysylphosphatidylglycerol biosynthesis bifunctional protein LysX (lysX).